The chain runs to 361 residues: Myb/SANT-like DNA-binding domain-containing protein 7 (361 aa).

The region spanning 11–70 is the Myb-like domain; the sequence is RWSRQETRTLLSILGEAEYIQRLQTVHHNADVYQAVSKRMQQEGFRRTERQCRSKFKVLK. Disordered stretches follow at residues 174–198 and 217–272; these read TSDL…SYSS and RLGV…ARRR. Polar residues-rich tracts occupy residues 187 to 198 and 226 to 249; these read AGCSQGTPSYSS and PCTS…SSSR.

This is Myb/SANT-like DNA-binding domain-containing protein 7 from Homo sapiens (Human).